A 207-amino-acid chain; its full sequence is ATP synthase subunit b 2 (207 aa).

The span at 1 to 31 (MVAQAAPPAGTAGQGTHEAASAAHGAAAAHG) shows a compositional bias: low complexity. The interval 1-41 (MVAQAAPPAGTAGQGTHEAASAAHGAAAAHGAAEEGHGKKS) is disordered. A helical transmembrane segment spans residues 48–70 (ATTFASQLLWLVLSFGLLYLLMS).

This sequence belongs to the ATPase B chain family. F-type ATPases have 2 components, F(1) - the catalytic core - and F(0) - the membrane proton channel. F(1) has five subunits: alpha(3), beta(3), gamma(1), delta(1), epsilon(1). F(0) has three main subunits: a(1), b(2) and c(10-14). The alpha and beta chains form an alternating ring which encloses part of the gamma chain. F(1) is attached to F(0) by a central stalk formed by the gamma and epsilon chains, while a peripheral stalk is formed by the delta and b chains.

It localises to the cell inner membrane. F(1)F(0) ATP synthase produces ATP from ADP in the presence of a proton or sodium gradient. F-type ATPases consist of two structural domains, F(1) containing the extramembraneous catalytic core and F(0) containing the membrane proton channel, linked together by a central stalk and a peripheral stalk. During catalysis, ATP synthesis in the catalytic domain of F(1) is coupled via a rotary mechanism of the central stalk subunits to proton translocation. In terms of biological role, component of the F(0) channel, it forms part of the peripheral stalk, linking F(1) to F(0). This is ATP synthase subunit b 2 from Xanthobacter autotrophicus (strain ATCC BAA-1158 / Py2).